Consider the following 326-residue polypeptide: tRNA U34 carboxymethyltransferase (326 aa).

Carboxy-S-adenosyl-L-methionine is bound by residues Lys-95, Trp-109, Lys-114, Gly-134, 184–185 (VE), Tyr-204, and Arg-319.

This sequence belongs to the class I-like SAM-binding methyltransferase superfamily. CmoB family.

It catalyses the reaction carboxy-S-adenosyl-L-methionine + 5-hydroxyuridine(34) in tRNA = 5-carboxymethoxyuridine(34) in tRNA + S-adenosyl-L-homocysteine + H(+). Catalyzes carboxymethyl transfer from carboxy-S-adenosyl-L-methionine (Cx-SAM) to 5-hydroxyuridine (ho5U) to form 5-carboxymethoxyuridine (cmo5U) at position 34 in tRNAs. This chain is tRNA U34 carboxymethyltransferase, found in Trichodesmium erythraeum (strain IMS101).